Here is a 505-residue protein sequence, read N- to C-terminus: Peroxisome proliferator-activated receptor gamma (505 aa).

A glycan (O-linked (GlcNAc) threonine) is linked at threonine 84. Position 112 is a phosphoserine; by MAPK (serine 112). Residues 136–210 constitute a DNA-binding region (nuclear receptor); sequence AIECRVCGDK…VGMSHNAIRF (75 aa). NR C4-type zinc fingers lie at residues 139 to 159 and 176 to 198; these read CRVC…CEGC and CDLN…FQKC. The interaction with FAM120B stretch occupies residues 205–280; it reads HNAIRFGRMP…DKSPFVIYDM (76 aa). The region spanning 238–503 is the NR LBD domain; that stretch reads DLRALAKHLY…HPLLQEIYKD (266 aa). Residue lysine 252 forms a Glycyl lysine isopeptide (Lys-Gly) (interchain with G-Cter in ubiquitin) linkage. The 9aaTAD signature appears at 495-503; sequence PLLQEIYKD.

Belongs to the nuclear hormone receptor family. NR1 subfamily. As to quaternary structure, interacts with FOXO1 (acetylated form). Heterodimer with other nuclear receptors, such as RXRA. The heterodimer with the retinoic acid receptor RXRA is called adipocyte-specific transcription factor ARF6. Interacts with NCOA6 coactivator, leading to a strong increase in transcription of target genes. Interacts with coactivator PPARBP, leading to a mild increase in transcription of target genes. Interacts with NOCA7 in a ligand-inducible manner. Interacts with NCOA1 and NCOA2 LXXLL motifs. Interacts with ASXL1, ASXL2, DNTTIP2, FAM120B, MAP2K1/MEK1, NR0B2, PDPK1, PRDM16, PRMT2 and TGFB1I1. Interacts (when activated by agonist) with PPP5C. Interacts with HELZ2 and THRAP3; the interaction stimulates the transcriptional activity of PPARG. Interacts with PER2, the interaction is ligand dependent and blocks PPARG recruitment to target promoters. Interacts with NOCT. Interacts with ACTN4. Interacts (when in the liganded conformation) with GPS2. Interacts with CRY1 and CRY2 in a ligand-dependent manner. In the absence of hormonal ligand, interacts with TACC1. In macrophages, interacts with PAQR3 and STUB1; the interactions promote PPARG poylubiquitination and STUB1-mediated degradation. In terms of processing, phosphorylated by MAPK. The phosphorylation inhibits PPAR gamma activity. Post-translationally, O-GlcNAcylation at Thr-84 reduces transcriptional activity in adipocytes. Phosphorylated at basal conditions and dephosphorylated when treated with the ligand. May be dephosphorylated by PPP5C. The phosphorylated form may be inactive and dephosphorylation at induces adipogenic activity. In terms of processing, ubiquitinated by E3 ubiquitin-protein ligase complex containing FBXO9; leading to proteasomal degradation. Ubiquitinated at Lys-252 by TRIM55 leading to proteasomal degradation. Ubiquitinated by E3 ubiquitin-protein ligase STUB1/CHIP; leading to proteasomal degradation. Highest expression in adipose tissue.

It localises to the nucleus. Its subcellular location is the cytoplasm. With respect to regulation, PDPK1 activates its transcriptional activity independently of its kinase activity. Its function is as follows. Nuclear receptor that binds peroxisome proliferators such as hypolipidemic drugs and fatty acids. Once activated by a ligand, the nuclear receptor binds to DNA specific PPAR response elements (PPRE) and modulates the transcription of its target genes, such as acyl-CoA oxidase. It therefore controls the peroxisomal beta-oxidation pathway of fatty acids. Key regulator of adipocyte differentiation and glucose homeostasis. ARF6 acts as a key regulator of the tissue-specific adipocyte P2 (aP2) enhancer. Acts as a critical regulator of gut homeostasis by suppressing NF-kappa-B-mediated pro-inflammatory responses. Plays a role in the regulation of cardiovascular circadian rhythms by regulating the transcription of BMAL1 in the blood vessels. The protein is Peroxisome proliferator-activated receptor gamma (Pparg) of Rattus norvegicus (Rat).